A 289-amino-acid chain; its full sequence is Mitochondrial fission regulator 1-like (289 aa).

Thr27 is modified (phosphothreonine). Phosphoserine is present on residues Ser38, Ser100, Ser107, Ser221, Ser222, Ser235, Ser258, and Ser270.

Belongs to the MTFR1 family. Post-translationally, phosphorylated by AMPK. Upon stress, phosphorylation by AMPK is sufficient to induce mitochondrial fragmentation.

Its subcellular location is the mitochondrion outer membrane. Functionally, mitochondrial protein required for adaptation of miochondrial dynamics to metabolic changes. Regulates mitochondrial morphology at steady state and mediates AMPK-dependent stress-induced mitochondrial fragmentation via the control of OPA1 levels. This is Mitochondrial fission regulator 1-like (MTFR1L) from Bos taurus (Bovine).